Reading from the N-terminus, the 376-residue chain is Glutamate 5-kinase (376 aa).

Lys-15 contributes to the ATP binding site. Substrate-binding residues include Ser-55, Asp-141, and Asn-153. Residues 173–174 (SD) and 215–221 (TGGMQTK) each bind ATP. The PUA domain occupies 280–361 (AGRLTVDAGA…HAIAEVLDEA (82 aa)).

It belongs to the glutamate 5-kinase family.

It is found in the cytoplasm. It catalyses the reaction L-glutamate + ATP = L-glutamyl 5-phosphate + ADP. Its pathway is amino-acid biosynthesis; L-proline biosynthesis; L-glutamate 5-semialdehyde from L-glutamate: step 1/2. Its function is as follows. Catalyzes the transfer of a phosphate group to glutamate to form L-glutamate 5-phosphate. The polypeptide is Glutamate 5-kinase (Salinibacter ruber (strain DSM 13855 / M31)).